Here is a 337-residue protein sequence, read N- to C-terminus: Glycerol-3-phosphate dehydrogenase [NAD(P)+] (337 aa).

Trp-11, Arg-30, and Lys-113 together coordinate NADPH. Residues Lys-113, Gly-141, and Ser-143 each contribute to the sn-glycerol 3-phosphate site. NADPH is bound at residue Ala-145. Sn-glycerol 3-phosphate-binding residues include Lys-196, Asp-249, Ser-259, Arg-260, and Asn-261. The active-site Proton acceptor is the Lys-196. NADPH is bound at residue Arg-260. NADPH is bound by residues Val-284 and Glu-286.

The protein belongs to the NAD-dependent glycerol-3-phosphate dehydrogenase family.

It is found in the cytoplasm. It catalyses the reaction sn-glycerol 3-phosphate + NAD(+) = dihydroxyacetone phosphate + NADH + H(+). The enzyme catalyses sn-glycerol 3-phosphate + NADP(+) = dihydroxyacetone phosphate + NADPH + H(+). It functions in the pathway membrane lipid metabolism; glycerophospholipid metabolism. Catalyzes the reduction of the glycolytic intermediate dihydroxyacetone phosphate (DHAP) to sn-glycerol 3-phosphate (G3P), the key precursor for phospholipid synthesis. This is Glycerol-3-phosphate dehydrogenase [NAD(P)+] from Leptothrix cholodnii (strain ATCC 51168 / LMG 8142 / SP-6) (Leptothrix discophora (strain SP-6)).